A 702-amino-acid chain; its full sequence is DNA ligase (702 aa).

Residues 32 to 36 and 81 to 82 contribute to the NAD(+) site; these read DAEYD and SL. Residues 104–125 form a disordered region; that stretch reads AESSAQKASLNPLVRDSDQKNR. NAD(+) is bound at residue E139. K141 functions as the N6-AMP-lysine intermediate in the catalytic mechanism. The NAD(+) site is built by R162, E199, K316, and K340. Residues C434, C437, C452, and C458 each coordinate Zn(2+). Residues 616–702 form the BRCT domain; it reads KPNHPFRDKT…KALKPEGTKV (87 aa).

It belongs to the NAD-dependent DNA ligase family. LigA subfamily. It depends on Mg(2+) as a cofactor. Mn(2+) serves as cofactor.

It carries out the reaction NAD(+) + (deoxyribonucleotide)n-3'-hydroxyl + 5'-phospho-(deoxyribonucleotide)m = (deoxyribonucleotide)n+m + AMP + beta-nicotinamide D-nucleotide.. DNA ligase that catalyzes the formation of phosphodiester linkages between 5'-phosphoryl and 3'-hydroxyl groups in double-stranded DNA using NAD as a coenzyme and as the energy source for the reaction. It is essential for DNA replication and repair of damaged DNA. The chain is DNA ligase from Hamiltonella defensa subsp. Acyrthosiphon pisum (strain 5AT).